We begin with the raw amino-acid sequence, 104 residues long: uncharacterized protein (104 aa).

Residues 42-104 (ARDSFDQDFE…AREERHKLGR (63 aa)) adopt a coiled-coil conformation.

It belongs to the WXG100 family.

This is an uncharacterized protein from Bacillus subtilis (strain 168).